Here is a 343-residue protein sequence, read N- to C-terminus: L-threonine 3-dehydrogenase (343 aa).

Cys38 is a Zn(2+) binding site. Catalysis depends on charge relay system residues Thr40 and His43. Zn(2+) is bound by residues His63, Glu64, Cys93, Cys96, Cys99, and Cys107. NAD(+)-binding positions include Ile175, Asp195, Arg200, 262–264, and 286–287; these read LGL and IY.

The protein belongs to the zinc-containing alcohol dehydrogenase family. As to quaternary structure, homotetramer. Requires Zn(2+) as cofactor.

It localises to the cytoplasm. It catalyses the reaction L-threonine + NAD(+) = (2S)-2-amino-3-oxobutanoate + NADH + H(+). The protein operates within amino-acid degradation; L-threonine degradation via oxydo-reductase pathway; glycine from L-threonine: step 1/2. Functionally, catalyzes the NAD(+)-dependent oxidation of L-threonine to 2-amino-3-ketobutyrate. The sequence is that of L-threonine 3-dehydrogenase from Saccharopolyspora erythraea (strain ATCC 11635 / DSM 40517 / JCM 4748 / NBRC 13426 / NCIMB 8594 / NRRL 2338).